We begin with the raw amino-acid sequence, 1097 residues long: Putative regulator of nonsense transcripts 1 (1097 aa).

A compositionally biased stretch (low complexity) spans 42-53 (SQTQTQGHTQSQ). A disordered region spans residues 42-67 (SQTQTQGHTQSQLDNQLNGPDDGLHN). The region spanning 96–254 (TKDLPVHACR…NKLEELWKDN (159 aa)) is the Upf1 CH-rich domain. Cysteine 104, cysteine 108, cysteine 119, serine 122, cysteine 127, histidine 137, histidine 141, cysteine 147, cysteine 165, cysteine 168, cysteine 191, and cysteine 195 together coordinate Zn(2+). The segment at 104–137 (CRSYCGIHDPACVVYCNTSKKWFCNGRGNTSGSH) is C3H. The tract at residues 119 to 147 (CNTSKKWFCNGRGNTSGSHIVNHLVRAKC) is CC/SHH/C. The tract at residues 165 to 195 (CYNCGCRNVFLLGFIPAKADSVVVLLCRQPC) is C4. ATP-binding positions include glutamine 457, 474 to 481 (GPPGTGKT), tyrosine 683, and glutamate 813. Residues 977–998 (QGQTNGPAAGRGAMKGKSGRGG) are disordered.

It belongs to the DNA2/NAM7 helicase family.

It localises to the cytoplasm. It is found in the P-body. The catalysed reaction is ATP + H2O = ADP + phosphate + H(+). Its function is as follows. RNA-dependent helicase required for nonsense-mediated decay (NMD) of aberrant mRNAs containing premature stop codons and modulates the expression level of normal mRNAs. The formation of an rent1-rent2-rent3 surveillance complex is believed to activate NMD. In Takifugu rubripes (Japanese pufferfish), this protein is Putative regulator of nonsense transcripts 1 (rent1).